The primary structure comprises 510 residues: Olfactomedin-4 (510 aa).

Positions 1-20 (MRPGLSFLLALLFFLGQAAG) are cleaved as a signal peptide. N-linked (GlcNAc...) asparagine glycosylation is found at asparagine 72 and asparagine 136. Positions 155-234 (DFELIKVEVK…ECEASKDQNT (80 aa)) form a coiled coil. The Olfactomedin-like domain occupies 245–507 (SCGHGGVVNI…LLNYDLSVLQ (263 aa)). Cysteine 246 and cysteine 437 are joined by a disulfide. Asparagine 253 carries N-linked (GlcNAc...) asparagine glycosylation.

In terms of assembly, homomultimer; disulfide-linked. Interacts with NDUFA13. Interacts with cell surface lectins (locutions ricinus communis agglutinin I, concanavalin-A and wheat germ agglutinin) and cadherin. Post-translationally, N-glycosylated. As to expression, expressed during myeloid lineage development. Much higher expression in bone marrow neutrophils than in peripheral blood neutrophils (at protein level). Strongly expressed in the prostate, small intestine and colon and moderately expressed in the bone marrow and stomach. Overexpressed in some pancreatic cancer tissues.

The protein localises to the secreted. It is found in the extracellular space. It localises to the mitochondrion. In terms of biological role, may promote proliferation of pancreatic cancer cells by favoring the transition from the S to G2/M phase. In myeloid leukemic cell lines, inhibits cell growth and induces cell differentiation and apoptosis. May play a role in the inhibition of EIF4EBP1 phosphorylation/deactivation. Facilitates cell adhesion, most probably through interaction with cell surface lectins and cadherin. This is Olfactomedin-4 (OLFM4) from Homo sapiens (Human).